The sequence spans 137 residues: NADH-quinone oxidoreductase subunit A (137 aa).

Helical transmembrane passes span 12-32 (WAFA…LGVS), 68-88 (LVAM…AWAV), and 94-114 (GWVG…GLVY).

Belongs to the complex I subunit 3 family. As to quaternary structure, NDH-1 is composed of 13 different subunits. Subunits NuoA, H, J, K, L, M, N constitute the membrane sector of the complex.

The protein resides in the cell inner membrane. The enzyme catalyses a quinone + NADH + 5 H(+)(in) = a quinol + NAD(+) + 4 H(+)(out). Its function is as follows. NDH-1 shuttles electrons from NADH, via FMN and iron-sulfur (Fe-S) centers, to quinones in the respiratory chain. The immediate electron acceptor for the enzyme in this species is believed to be ubiquinone. Couples the redox reaction to proton translocation (for every two electrons transferred, four hydrogen ions are translocated across the cytoplasmic membrane), and thus conserves the redox energy in a proton gradient. The protein is NADH-quinone oxidoreductase subunit A of Ectopseudomonas mendocina (strain ymp) (Pseudomonas mendocina).